The chain runs to 210 residues: uncharacterized protein (210 aa).

The 90-residue stretch at 2–91 (SRHPEVKWAQ…AEAKWWKKLV (90 aa)) folds into the CS domain. The segment at 165-210 (GMGGMGGMDEFEDESDDEEEVSKPQDAEKAAEAGKSQESDAKTETS) is disordered. Residues 173-184 (DEFEDESDDEEE) are compositionally biased toward acidic residues. Positions 185–210 (VSKPQDAEKAAEAGKSQESDAKTETS) are enriched in basic and acidic residues.

This is an uncharacterized protein from Oryza sativa subsp. indica (Rice).